A 68-amino-acid polypeptide reads, in one-letter code: Protein SlyX homolog (68 aa).

Belongs to the SlyX family.

This is Protein SlyX homolog from Brucella melitensis biotype 1 (strain ATCC 23456 / CCUG 17765 / NCTC 10094 / 16M).